Here is a 341-residue protein sequence, read N- to C-terminus: Phenazine O-methyltransferase PhzM (341 aa).

S-adenosyl-L-methionine is bound by residues aspartate 205 and 231-233 (GDF). Histidine 251 serves as the catalytic Proton acceptor.

Belongs to the class I-like SAM-binding methyltransferase superfamily. Cation-independent O-methyltransferase family. Homodimer.

The enzyme catalyses 1,6-dihydroxyphenazine + S-adenosyl-L-methionine = 1-hydroxy-6-methoxyphenazine + S-adenosyl-L-homocysteine + H(+). It carries out the reaction 1-hydroxy-6-methoxyphenazine + S-adenosyl-L-methionine = 1,6-dimethoxyphenazine + S-adenosyl-L-homocysteine + H(+). The catalysed reaction is 1-hydroxy-6-methoxyphenazine N(10)-oxide + S-adenosyl-L-methionine = 1,6-dimethoxyphenazine N(5)-oxide + S-adenosyl-L-homocysteine. It catalyses the reaction 1,6-dihydroxyphenazine N(5),N(10)-dioxide + S-adenosyl-L-methionine = 1-hydroxy-6-methoxyphenazine N(5),N(10)-dioxide + S-adenosyl-L-homocysteine. The enzyme catalyses 1-hydroxy-6-methoxyphenazine N(5),N(10)-dioxide + S-adenosyl-L-methionine = 1,6-dimethoxyphenazine N(5),N(10)-dioxide + S-adenosyl-L-homocysteine. Involved in the biosynthesis of phenazine natural products including myxin, an N(5),N(10)-dioxide phenazine antiobiotic, which has antimicrobial activity. O-methyltransferase, which converts iodinin (1,6-dihydroxyphenazine N(5),N(10)-dioxide) to myxin (1-hydroxy-6-methoxyphenazine N(5),N(10)-dioxide). Catalyzes both monomethoxy and dimethoxy formation of phenazine natural compounds. Acts on a wide variety of substrates, catalyzing O-methylation of phenazines with non-, mono- or di-N-oxide. Highest activity with 1,6-dihydroxyphenazine (DHP) as substrate. Less active with monohydroxy-containing and monohydroxy-monomethoxy-containing phenazines. Least active with non-phenazine substrates, such as 8-hydroxyquinoline and 6-hydroxyquinoline. Is not able to convert 1-hydroxyphenazine to 1-hydroxy-N5-methylphenazine (pyocyanine), hence does not function as an N-methyltransferase. The chain is Phenazine O-methyltransferase PhzM from Lysobacter antibioticus.